The chain runs to 849 residues: Autoinducer 1 sensor kinase/phosphatase LuxN (849 aa).

The next 7 membrane-spanning stretches (helical) occupy residues 9–29 (IVYA…MWLF), 41–61 (VIFG…IAWI), 160–180 (SYFF…LVAM), 196–216 (IAGI…MTYF), 220–242 (FSLT…YALL), 251–275 (YIAY…AIFI), and 283–301 (WLIA…QLLY). The region spanning 468 to 683 (SIAHEMRNPL…EFHLYFPVVP (216 aa)) is the Histidine kinase domain. Histidine 471 is modified (phosphohistidine; by autocatalysis). A Response regulatory domain is found at 722 to 835 (TVLIVDDKEV…ALRHVLGNWL (114 aa)). A 4-aspartylphosphate modification is found at aspartate 771.

It localises to the cell inner membrane. The catalysed reaction is ATP + protein L-histidine = ADP + protein N-phospho-L-histidine.. Its activity is regulated as follows. The phosphatase activity is constitutive and the kinase activity is regulated by the presence or absence of AI-1. At low cell density the kinase activity overrides the phosphatase activity. In terms of biological role, at low cell density, in the absence of AI-1 (autoinducer 1), LuxN has a kinase activity and autophosphorylates on His-471. The phosphoryl group is then transferred on Asp-771 of the response regulator domain. The phosphoryl group is transferred to LuxU, and ultimately to LuxO. At high cell density, in the presence of AI-1, the kinase activity is inactivated, and the response regulator domain has a phosphatase activity. LuxN phosphatase acts on itself. As LuxU could function to establish an equilibrium between the aspartyl-phosphate of LuxN and the aspartyl-phosphate of LuxO, LuxU transfers phosphate from LuxO to LuxN and finally phosphate is drained from the system. In Vibrio campbellii (strain ATCC BAA-1116), this protein is Autoinducer 1 sensor kinase/phosphatase LuxN (luxN).